A 248-amino-acid polypeptide reads, in one-letter code: MGQKIHPHGLRLGITSDWKSHWYADKNYAEYLAEDIRVREYLVKTLDRAGIADVVIERTRERVRVDIHTARPGIVIGRRGSEADRLRTSLEKLTGKQVALNILEVKNIDANAQLVAQSIAEQLTNRVAFRRAMRKAIQGAMRQPQVKGIKVVCSGRLGGAEMSRTERYHEGRVPLHTLRAEIDYGTYEAHTTFGRIGVKVWIYKGDVVGGRRESEINAPAERRGRGDRNGRPRRGGQRRQRSEQKQEG.

Positions 38-106 (VREYLVKTLD…QVALNILEVK (69 aa)) constitute a KH type-2 domain. Over residues 213–230 (ESEINAPAERRGRGDRNG) the composition is skewed to basic and acidic residues. Residues 213–248 (ESEINAPAERRGRGDRNGRPRRGGQRRQRSEQKQEG) are disordered.

It belongs to the universal ribosomal protein uS3 family. In terms of assembly, part of the 30S ribosomal subunit. Forms a tight complex with proteins S10 and S14.

Functionally, binds the lower part of the 30S subunit head. Binds mRNA in the 70S ribosome, positioning it for translation. In Corynebacterium diphtheriae (strain ATCC 700971 / NCTC 13129 / Biotype gravis), this protein is Small ribosomal subunit protein uS3.